The following is a 699-amino-acid chain: Dymeclin (699 aa).

The N-myristoyl glycine moiety is linked to residue Gly2. Position 346 is a phosphoserine (Ser346).

It belongs to the dymeclin family.

This is Dymeclin from Drosophila melanogaster (Fruit fly).